The chain runs to 241 residues: MAGPSTTSNAPKQRKRVEAETSSNTSTTLRRAKDGSAFALCEGCNKSVAVALISMHNCSLDAKIRVNLEAQVVETQAEAKKKPAEKKKTTSDGPKPKRLKKTNDEKKSSSTSNKPKRPLTAFFIFMSDFRKTFKSEHNGSLAKDAAKIGGEKWKSLTEEEKKVYLDKAAELKAEYNKSLESNDADEEEEDEEKQSDDVDDAEEKQVDDDDEVEEKEVENTDDDKKEAEGKEEEEEEILDDY.

Polar residues-rich tracts occupy residues 1-11 (MAGPSTTSNAP) and 20-29 (ETSSNTSTTL). 3 disordered regions span residues 1-30 (MAGP…TTLR), 75-116 (TQAE…NKPK), and 174-241 (EYNK…LDDY). Residues 77–90 (AEAKKKPAEKKKTT) show a composition bias toward basic and acidic residues. The HMG box DNA-binding region spans 115–183 (PKRPLTAFFI…EYNKSLESND (69 aa)). 2 stretches are compositionally biased toward acidic residues: residues 182 to 221 (NDAD…ENTD) and 229 to 241 (GKEE…LDDY).

Belongs to the HMGB family. Phosphorylated. In terms of tissue distribution, expressed at low levels in lateral roots, root tips, cotyledons, leaves and flowers (including pedicels, but excluding styles).

It localises to the nucleus. Functionally, binds preferentially double-stranded supercoiled DNA. Required for karyogamy during female gametophyte development, when the two polar nuclei fuse to form the diploid central cell nucleus. This is High mobility group B protein 7 (HMGB7) from Arabidopsis thaliana (Mouse-ear cress).